A 627-amino-acid polypeptide reads, in one-letter code: Hemocyanin B chain (627 aa).

Residues histidine 173, histidine 177, and histidine 204 each coordinate Cu cation. N-linked (GlcNAc...) asparagine glycosylation is found at asparagine 312 and asparagine 316. 3 residues coordinate Cu cation: histidine 324, histidine 328, and histidine 364. Cysteine 534 and cysteine 582 are joined by a disulfide.

Belongs to the tyrosinase family. Hemocyanin subfamily. In terms of assembly, tarantula hemocyanin is a 24-chain polymer with seven different chains identified. In terms of tissue distribution, hemolymph.

The protein resides in the secreted. It localises to the extracellular space. Its function is as follows. Hemocyanins are copper-containing oxygen carriers occurring freely dissolved in the hemolymph of many mollusks and arthropods. The polypeptide is Hemocyanin B chain (HCB) (Aphonopelma sp. (American tarantula)).